The chain runs to 31 residues: Cytochrome b6-f complex subunit 6 (31 aa).

The helical transmembrane segment at valine 4–valine 24 threads the bilayer.

The protein belongs to the PetL family. In terms of assembly, the 4 large subunits of the cytochrome b6-f complex are cytochrome b6, subunit IV (17 kDa polypeptide, PetD), cytochrome f and the Rieske protein, while the 4 small subunits are PetG, PetL, PetM and PetN. The complex functions as a dimer.

Its subcellular location is the plastid. The protein resides in the chloroplast thylakoid membrane. Its function is as follows. Component of the cytochrome b6-f complex, which mediates electron transfer between photosystem II (PSII) and photosystem I (PSI), cyclic electron flow around PSI, and state transitions. PetL is important for photoautotrophic growth as well as for electron transfer efficiency and stability of the cytochrome b6-f complex. The chain is Cytochrome b6-f complex subunit 6 from Mesostigma viride (Green alga).